We begin with the raw amino-acid sequence, 426 residues long: Serine--tRNA ligase (426 aa).

Threonine 233–glutamate 235 lines the L-serine pocket. Arginine 264–glutamate 266 contacts ATP. Glutamate 287 lines the L-serine pocket. An ATP-binding site is contributed by glutamate 351–serine 354. Residue serine 387 coordinates L-serine.

The protein belongs to the class-II aminoacyl-tRNA synthetase family. Type-1 seryl-tRNA synthetase subfamily. In terms of assembly, homodimer. The tRNA molecule binds across the dimer.

It localises to the cytoplasm. The catalysed reaction is tRNA(Ser) + L-serine + ATP = L-seryl-tRNA(Ser) + AMP + diphosphate + H(+). The enzyme catalyses tRNA(Sec) + L-serine + ATP = L-seryl-tRNA(Sec) + AMP + diphosphate + H(+). Its pathway is aminoacyl-tRNA biosynthesis; selenocysteinyl-tRNA(Sec) biosynthesis; L-seryl-tRNA(Sec) from L-serine and tRNA(Sec): step 1/1. Catalyzes the attachment of serine to tRNA(Ser). Is also able to aminoacylate tRNA(Sec) with serine, to form the misacylated tRNA L-seryl-tRNA(Sec), which will be further converted into selenocysteinyl-tRNA(Sec). The sequence is that of Serine--tRNA ligase from Colwellia psychrerythraea (strain 34H / ATCC BAA-681) (Vibrio psychroerythus).